Reading from the N-terminus, the 766-residue chain is Dipeptidyl peptidase 4 (766 aa).

At 1-6 (MKTPWK) the chain is on the cytoplasmic side. The helical; Signal-anchor for type II membrane protein transmembrane segment at 7-28 (VLLGLLGAAALVTIITVPVVLL) threads the bilayer. At 29 to 766 (NKGTDDATAD…HFIKQCFSLP (738 aa)) the chain is on the extracellular side. 7 N-linked (GlcNAc...) asparagine glycosylation sites follow: N85, N92, N150, N219, N229, N281, and N321. Cystine bridges form between C328–C339, C385–C394, C444–C447, and C454–C472. N-linked (GlcNAc...) asparagine glycosylation occurs at N520. S630 (charge relay system) is an active-site residue. C649 and C762 are oxidised to a cystine. N-linked (GlcNAc...) asparagine glycosylation is present at N685. Residues D708 and H740 each act as charge relay system in the active site.

This sequence belongs to the peptidase S9B family. DPPIV subfamily. As to quaternary structure, monomer. Homodimer. Heterodimer with Seprase (FAP). Requires homodimerization for optimal dipeptidyl peptidase activity and T-cell costimulation. Found in a membrane raft complex, at least composed of BCL10, CARD11, DPP4 and IKBKB. Associates with collagen. Interacts with PTPRC; the interaction is enhanced in an interleukin-12-dependent manner in activated lymphocytes. Interacts (via extracellular domain) with ADA; does not inhibit its dipeptidyl peptidase activity. Interacts with CAV1 (via the N-terminus); the interaction is direct. Interacts (via cytoplasmic tail) with CARD11 (via PDZ domain); its homodimerization is necessary for interaction with CARD11. Interacts with IGF2R; the interaction is direct. Interacts with GPC3. Interacts with human coronavirus-EMC spike protein and acts as a receptor for this virus. (Microbial infection) Interacts with MERS coronavirus/MERS-CoV spike protein. Post-translationally, the soluble form (Dipeptidyl peptidase 4 soluble form also named SDPP) derives from the membrane form (Dipeptidyl peptidase 4 membrane form also named MDPP) by proteolytic processing. N- and O-Glycosylated. In terms of processing, phosphorylated. Mannose 6-phosphate residues in the carbohydrate moiety are necessary for interaction with IGF2R in activated T-cells. Mannose 6-phosphorylation is induced during T-cell activation. Expressed specifically in lymphatic vessels but not in blood vessels in the skin, small intestine, esophagus, ovary, breast and prostate glands. Not detected in lymphatic vessels in the lung, kidney, uterus, liver and stomach (at protein level). Expressed in the poorly differentiated crypt cells of the small intestine as well as in the mature villous cells. Expressed at very low levels in the colon.

It localises to the secreted. The protein resides in the cell membrane. It is found in the apical cell membrane. The protein localises to the cell projection. Its subcellular location is the invadopodium membrane. It localises to the lamellipodium membrane. The protein resides in the cell junction. It is found in the membrane raft. It catalyses the reaction Release of an N-terminal dipeptide, Xaa-Yaa-|-Zaa-, from a polypeptide, preferentially when Yaa is Pro, provided Zaa is neither Pro nor hydroxyproline.. Its activity is regulated as follows. Inhibited by GPC3 and diprotin A. Its function is as follows. Cell surface glycoprotein receptor involved in the costimulatory signal essential for T-cell receptor (TCR)-mediated T-cell activation. Acts as a positive regulator of T-cell coactivation, by binding at least ADA, CAV1, IGF2R, and PTPRC. Its binding to CAV1 and CARD11 induces T-cell proliferation and NF-kappa-B activation in a T-cell receptor/CD3-dependent manner. Its interaction with ADA also regulates lymphocyte-epithelial cell adhesion. In association with FAP is involved in the pericellular proteolysis of the extracellular matrix (ECM), the migration and invasion of endothelial cells into the ECM. May be involved in the promotion of lymphatic endothelial cells adhesion, migration and tube formation. When overexpressed, enhanced cell proliferation, a process inhibited by GPC3. Also acts as a serine exopeptidase with a dipeptidyl peptidase activity that regulates various physiological processes by cleaving peptides in the circulation, including many chemokines, mitogenic growth factors, neuropeptides and peptide hormones such as brain natriuretic peptide 32. Removes N-terminal dipeptides sequentially from polypeptides having unsubstituted N-termini provided that the penultimate residue is proline. Functionally, (Microbial infection) Acts as a receptor for human coronavirus MERS-CoV-2. In Homo sapiens (Human), this protein is Dipeptidyl peptidase 4.